We begin with the raw amino-acid sequence, 400 residues long: Enoyl-[acyl-carrier-protein] reductase [NADH] (400 aa).

NAD(+) is bound by residues 48 to 53, 74 to 75, 111 to 112, and 139 to 140; these read GSSSGY, FE, DA, and LA. Tyrosine 225 is a binding site for substrate. Residue tyrosine 235 is the Proton donor of the active site. NAD(+)-binding positions include lysine 244 and 273 to 275; that span reads VVT.

The protein belongs to the TER reductase family. Monomer.

The enzyme catalyses a 2,3-saturated acyl-[ACP] + NAD(+) = a (2E)-enoyl-[ACP] + NADH + H(+). Its pathway is lipid metabolism; fatty acid biosynthesis. In terms of biological role, involved in the final reduction of the elongation cycle of fatty acid synthesis (FAS II). Catalyzes the reduction of a carbon-carbon double bond in an enoyl moiety that is covalently linked to an acyl carrier protein (ACP). The sequence is that of Enoyl-[acyl-carrier-protein] reductase [NADH] from Shewanella piezotolerans (strain WP3 / JCM 13877).